Here is a 1325-residue protein sequence, read N- to C-terminus: SCAN domain-containing protein 3 (1325 aa).

Positions 52–134 constitute an SCAN box domain; the sequence is RQRFRQFCYQ…TLLEDLEREL (83 aa). The stretch at 246 to 275 forms a coiled coil; that stretch reads KAKYCQLIKEVKEAKAKAKKESVDYRRLAR. The Integrase catalytic domain occupies 366-526; it reads KSIKEVSSRC…TPCESAFSSE (161 aa). Residues 542-568 are a coiled coil; that stretch reads ASLHTENELDQADKELENTLRAQYEEN.

As to expression, weakly expressed in the lung (at protein level).

The protein localises to the nucleus. The sequence is that of SCAN domain-containing protein 3 from Homo sapiens (Human).